We begin with the raw amino-acid sequence, 305 residues long: J domain-containing protein 1 (305 aa).

A J domain is found at 91 to 163 (TPYEVLGLVK…SRRRMYDMYA (73 aa)). The chain crosses the membrane as a helical span at residues 212 to 232 (WGMVVWALCMLAGFQVMAFLI).

The protein belongs to the DnaJ family.

Its subcellular location is the mitochondrion membrane. Functionally, probable chaperone. The polypeptide is J domain-containing protein 1 (JID1) (Eremothecium gossypii (strain ATCC 10895 / CBS 109.51 / FGSC 9923 / NRRL Y-1056) (Yeast)).